Consider the following 307-residue polypeptide: uncharacterized protein (307 aa).

A helical membrane pass occupies residues 12–34; sequence LLAFLLALIMIGSVFAYMLSGGS.

The protein resides in the membrane. This is an uncharacterized protein from Archaeoglobus fulgidus (strain ATCC 49558 / DSM 4304 / JCM 9628 / NBRC 100126 / VC-16).